We begin with the raw amino-acid sequence, 113 residues long: Mini zinc finger protein 2 (113 aa).

The ZF-HD dimerization-type; degenerate zinc-finger motif lies at 24–83 (YGECRRNHAASTGGHAVDGCREFIAAEDGGGGNSTSAVGVAAAALKCAACGCHRSFHRRV). The segment at 93–113 (DCASGDTSSSSPSSSSSLSSE) is disordered. Over residues 100–113 (SSSSPSSSSSLSSE) the composition is skewed to low complexity.

Homo- and heterodimers.

It localises to the cytoplasm. In terms of biological role, inhibits zinc finger homeodomain (ZHD) transcription factors, by interacting with them to prevent both their nuclear localization and their DNA-binding properties. In Oryza sativa subsp. japonica (Rice), this protein is Mini zinc finger protein 2 (MIF3).